A 953-amino-acid chain; its full sequence is Eukaryotic translation initiation factor 3 subunit A (953 aa).

In terms of domain architecture, PCI spans L323–H504. Coiled coils occupy residues Q593–A642, M670–F704, and E732–R877. Residues I603–R623 form a disordered region. Disordered regions lie at residues E810–R861 and G893–S953. Composition is skewed to basic and acidic residues over residues K812–R861, G895–D919, and W928–S953.

This sequence belongs to the eIF-3 subunit A family. Component of the eukaryotic translation initiation factor 3 (eIF-3) complex.

Its subcellular location is the cytoplasm. Its function is as follows. RNA-binding component of the eukaryotic translation initiation factor 3 (eIF-3) complex, which is involved in protein synthesis of a specialized repertoire of mRNAs and, together with other initiation factors, stimulates binding of mRNA and methionyl-tRNAi to the 40S ribosome. The eIF-3 complex specifically targets and initiates translation of a subset of mRNAs involved in cell proliferation. In Nematostella vectensis (Starlet sea anemone), this protein is Eukaryotic translation initiation factor 3 subunit A.